We begin with the raw amino-acid sequence, 113 residues long: U-scoloptoxin(16)-Sa1a (113 aa).

An N-terminal signal peptide occupies residues 1-29 (MAPPSNPLFVVLCWALFAYLMLVLRDIQA).

It belongs to the scoloptoxin-16 family. Contains 4 disulfide bonds. Expressed by the venom gland.

Its subcellular location is the secreted. In Scolopendra alternans (Florida Keys giant centipede), this protein is U-scoloptoxin(16)-Sa1a.